The primary structure comprises 384 residues: MKSKKILIVGAGFSGAVIGRQLAEKGHQVHIIDQRDHIGGNSYDARDSETNVMVHVYGPHIFHTDNETVWNYVNKHAEMMPYVNRVKATVNGQVFSLPINLHTINQFFSKTCSPDEARALIAEKGDSTIADPQTFEEQALRFIGKELYEAFFKGYTIKQWGMQPSELPASILKRLPVRFNYDDNYFNHKFQGMPKCGYTQMIKSILNHENIKVDLQREFIVEERTHYDHVFYSGPLDAFYGYQYGRLGYRTLDFKKFTYQGDYQGCAVMNYCSVDVPYTRITEHKYFSPWEQHDGSVCYKEYSRACEENDIPYYPIRQMGEMALLEKYLSLAENETNITFVGRLGTYRYLDMDVTIAEALKTAEVYLNSLTENQPMPVFTVSVR.

Residues 1-23 (MKSKKILIVGAGFSGAVIGRQLA) form the signal peptide. FAD contacts are provided by residues serine 14, 33–34 (DQ), asparagine 41, and 60–61 (HI). UDP-alpha-D-galactose is bound by residues asparagine 84, phenylalanine 151, threonine 156, tryptophan 160, and tyrosine 185. Phenylalanine 219 is a binding site for FAD. Residues asparagine 270, arginine 280, and tyrosine 314 each coordinate UDP-alpha-D-galactose. Arginine 343 is a binding site for FAD. Tyrosine 349 is a binding site for UDP-alpha-D-galactose. 350-355 (LDMDVT) lines the FAD pocket.

It belongs to the UDP-galactopyranose/dTDP-fucopyranose mutase family. Homodimer. It depends on FAD as a cofactor.

It carries out the reaction UDP-alpha-D-galactose = UDP-alpha-D-galactofuranose. It functions in the pathway bacterial outer membrane biogenesis; LPS O-antigen biosynthesis. Functionally, involved in the biosynthesis of the galactose-containing O-side-chain polysaccharide backbone structure of D-galactan I which is a key component of lipopolysaccharide (LPS). Catalyzes the interconversion through a 2-keto intermediate of uridine diphosphogalactopyranose (UDP-GalP) into uridine diphosphogalactofuranose (UDP-GalF) which is the biosynthetic precursor of galactofuranosyl residues. The protein is UDP-galactopyranose mutase (rfbD) of Klebsiella pneumoniae.